The chain runs to 62 residues: Large ribosomal subunit protein bL28 (62 aa).

The protein belongs to the bacterial ribosomal protein bL28 family.

The polypeptide is Large ribosomal subunit protein bL28 (Streptococcus thermophilus (strain CNRZ 1066)).